We begin with the raw amino-acid sequence, 309 residues long: Tagatose-6-phosphate kinase (309 aa).

Belongs to the carbohydrate kinase PfkB family. LacC subfamily.

It carries out the reaction D-tagatofuranose 6-phosphate + ATP = D-tagatofuranose 1,6-bisphosphate + ADP + H(+). It functions in the pathway carbohydrate metabolism; D-tagatose 6-phosphate degradation; D-glyceraldehyde 3-phosphate and glycerone phosphate from D-tagatose 6-phosphate: step 1/2. This is Tagatose-6-phosphate kinase from Streptococcus pneumoniae (strain Taiwan19F-14).